Consider the following 206-residue polypeptide: uncharacterized protein (206 aa).

The disordered stretch occupies residues 81–132 (EEQQQQQHHVHGPGCSHGHHHDSHANDGHHDEHHDEHHDHVNPDDVEDEFPR). Residues 82–96 (EQQQQQHHVHGPGCS) show a composition bias toward low complexity. Basic and acidic residues predominate over residues 103 to 123 (SHANDGHHDEHHDEHHDHVNP). A helical transmembrane segment spans residues 150–166 (YLTALCLLPIIGSLFSI).

The protein resides in the membrane. This is an uncharacterized protein from Dictyostelium discoideum (Social amoeba).